A 374-amino-acid polypeptide reads, in one-letter code: Putative F-box protein At3g16590 (374 aa).

Residues 1-45 (MPTKLPLELEDEILLRVPPLSLTRFRTVCKRWNTLFNDQRFINNH) enclose the F-box domain.

The sequence is that of Putative F-box protein At3g16590 from Arabidopsis thaliana (Mouse-ear cress).